Reading from the N-terminus, the 263-residue chain is Phosphatidylglycerol--prolipoprotein diacylglyceryl transferase (263 aa).

4 helical membrane-spanning segments follow: residues 15–35, 52–72, 83–103, and 112–132; these read ISIH…VYLA, FILL…VIFQ, IFAI…GAAV, and AIAV…AQSI. A 1,2-diacyl-sn-glycero-3-phospho-(1'-sn-glycerol) is bound at residue arginine 134. 3 helical membrane passes run 170–190, 200–220, and 227–247; these read VPTF…ILGL, GDVT…IEGM, and FVGL…GAVL.

Belongs to the Lgt family.

The protein localises to the cell membrane. It carries out the reaction L-cysteinyl-[prolipoprotein] + a 1,2-diacyl-sn-glycero-3-phospho-(1'-sn-glycerol) = an S-1,2-diacyl-sn-glyceryl-L-cysteinyl-[prolipoprotein] + sn-glycerol 1-phosphate + H(+). Its pathway is protein modification; lipoprotein biosynthesis (diacylglyceryl transfer). Its function is as follows. Catalyzes the transfer of the diacylglyceryl group from phosphatidylglycerol to the sulfhydryl group of the N-terminal cysteine of a prolipoprotein, the first step in the formation of mature lipoproteins. The sequence is that of Phosphatidylglycerol--prolipoprotein diacylglyceryl transferase from Streptococcus thermophilus (strain CNRZ 1066).